We begin with the raw amino-acid sequence, 204 residues long: Peptidyl-tRNA hydrolase (204 aa).

A tRNA-binding site is contributed by Tyr-19. His-24 acts as the Proton acceptor in catalysis. TRNA is bound by residues Tyr-70, Asn-72, and Asn-118.

The protein belongs to the PTH family. Monomer.

Its subcellular location is the cytoplasm. It catalyses the reaction an N-acyl-L-alpha-aminoacyl-tRNA + H2O = an N-acyl-L-amino acid + a tRNA + H(+). Hydrolyzes ribosome-free peptidyl-tRNAs (with 1 or more amino acids incorporated), which drop off the ribosome during protein synthesis, or as a result of ribosome stalling. Its function is as follows. Catalyzes the release of premature peptidyl moieties from peptidyl-tRNA molecules trapped in stalled 50S ribosomal subunits, and thus maintains levels of free tRNAs and 50S ribosomes. The chain is Peptidyl-tRNA hydrolase from Prochlorococcus marinus (strain SARG / CCMP1375 / SS120).